Reading from the N-terminus, the 309-residue chain is tRNA dimethylallyltransferase (309 aa).

Residue 10 to 17 (GPTASGKT) coordinates ATP. Position 12-17 (12-17 (TASGKT)) interacts with substrate. Interaction with substrate tRNA stretches follow at residues 35 to 38 (DSAL) and 240 to 245 (RCVGYR).

This sequence belongs to the IPP transferase family. In terms of assembly, monomer. Mg(2+) serves as cofactor.

The catalysed reaction is adenosine(37) in tRNA + dimethylallyl diphosphate = N(6)-dimethylallyladenosine(37) in tRNA + diphosphate. Catalyzes the transfer of a dimethylallyl group onto the adenine at position 37 in tRNAs that read codons beginning with uridine, leading to the formation of N6-(dimethylallyl)adenosine (i(6)A). This chain is tRNA dimethylallyltransferase, found in Baumannia cicadellinicola subsp. Homalodisca coagulata.